A 476-amino-acid chain; its full sequence is Zinc finger CCCH domain-containing protein 6 (476 aa).

Positions 1-10 are enriched in low complexity; that stretch reads MEQPHAAAAA. The tract at residues 1–57 is disordered; the sequence is MEQPHAAAAAAGGGEGEGGASPDTGLEGPMWRMGLGGGGGGGGGGGGGDGDAAGRLP. The segment covering 34-51 has biased composition (gly residues); it reads GLGGGGGGGGGGGGGDGD. 3 C3H1-type zinc fingers span residues 59 to 87, 108 to 136, and 153 to 181; these read RPGE…HPRD, RAGQ…HPKQ, and RLGE…HPEF. A compositionally biased stretch (polar residues) spans 290-301; sequence SSTGQSSNNQQE. The segment at 290–309 is disordered; it reads SSTGQSSNNQQEHGFPERPG. 2 C3H1-type zinc fingers span residues 307–335 and 353–381; these read RPGQ…HPRE and RPGA…HPMG. Positions 456–476 are disordered; it reads TMMRAQTNTTSGGSSSPGGGR.

The protein resides in the nucleus. In Oryza sativa subsp. japonica (Rice), this protein is Zinc finger CCCH domain-containing protein 6.